The following is a 491-amino-acid chain: Glutamyl-tRNA(Gln) amidotransferase subunit A (491 aa).

Residues lysine 78 and serine 158 each act as charge relay system in the active site. Residue serine 182 is the Acyl-ester intermediate of the active site.

This sequence belongs to the amidase family. GatA subfamily. As to quaternary structure, heterotrimer of A, B and C subunits.

It carries out the reaction L-glutamyl-tRNA(Gln) + L-glutamine + ATP + H2O = L-glutaminyl-tRNA(Gln) + L-glutamate + ADP + phosphate + H(+). In terms of biological role, allows the formation of correctly charged Gln-tRNA(Gln) through the transamidation of misacylated Glu-tRNA(Gln) in organisms which lack glutaminyl-tRNA synthetase. The reaction takes place in the presence of glutamine and ATP through an activated gamma-phospho-Glu-tRNA(Gln). This is Glutamyl-tRNA(Gln) amidotransferase subunit A from Bradyrhizobium sp. (strain ORS 278).